A 232-amino-acid polypeptide reads, in one-letter code: Phosphoglycolate phosphatase (232 aa).

The Nucleophile role is filled by Asp-13. Positions 13, 15, and 175 each coordinate Mg(2+).

It belongs to the HAD-like hydrolase superfamily. CbbY/CbbZ/Gph/YieH family. As to quaternary structure, monomer. It depends on Mg(2+) as a cofactor. Chloride serves as cofactor.

The enzyme catalyses 2-phosphoglycolate + H2O = glycolate + phosphate. It participates in organic acid metabolism; glycolate biosynthesis; glycolate from 2-phosphoglycolate: step 1/1. In terms of biological role, specifically catalyzes the dephosphorylation of 2-phosphoglycolate. Is involved in the dissimilation of the intracellular 2-phosphoglycolate formed during the DNA repair of 3'-phosphoglycolate ends, a major class of DNA lesions induced by oxidative stress. This is Phosphoglycolate phosphatase from Yersinia pseudotuberculosis serotype I (strain IP32953).